The chain runs to 472 residues: Ulvan lyase (472 aa).

Residues methionine 1–serine 21 form the signal peptide. Substrate-binding residues include asparagine 46 and asparagine 109. The active-site Proton donor is the histidine 110. Substrate is bound by residues lysine 112 and histidine 130. The Proton acceptor role is filled by tyrosine 175. Positions 191, 195, and 233 each coordinate substrate. Histidine 195 lines the Zn(2+) pocket. Zn(2+)-binding residues include histidine 251, cysteine 253, and histidine 265. Histidine 265 is a substrate binding site.

Belongs to the polysaccharide lyase 25 family.

In terms of biological role, ulvan lyase involved in ulvan degradation. Ulvan is the main polysaccharide component of the Ulvales (green seaweed) cell wall. It is composed of disaccharide building blocks comprising 3-sulfated rhamnose (Rha3S) linked to D-glucuronic acid (GlcA), L-iduronic acid (IduA), or D-xylose (Xyl). Ulvan lyase catalyzes the endolytic cleavage of the glycosidic bond between Rha3S and the uronic acids GlcA or IduA, producing oligosaccharides that have unsaturated 4-deoxy-L-threo-hex-4-enopyranosiduronic acid (deltaUA) at the non-reducing end. This results eventually in the degradation of the ulvan polysaccharide into deltaUA-Rha3S disaccharides and deltaUA-Rha3S-Xyl-Rha3S tetrasaccharides. The protein is Ulvan lyase of Nonlabens ulvanivorans (Persicivirga ulvanivorans).